A 181-amino-acid chain; its full sequence is ATP synthase subunit b 2 (181 aa).

The segment covering Met1–Gly12 has biased composition (low complexity). A disordered region spans residues Met1–Pro20. Residues Leu33–Pro53 form a helical membrane-spanning segment.

This sequence belongs to the ATPase B chain family. F-type ATPases have 2 components, F(1) - the catalytic core - and F(0) - the membrane proton channel. F(1) has five subunits: alpha(3), beta(3), gamma(1), delta(1), epsilon(1). F(0) has three main subunits: a(1), b(2) and c(10-14). The alpha and beta chains form an alternating ring which encloses part of the gamma chain. F(1) is attached to F(0) by a central stalk formed by the gamma and epsilon chains, while a peripheral stalk is formed by the delta and b chains.

It localises to the cell inner membrane. F(1)F(0) ATP synthase produces ATP from ADP in the presence of a proton or sodium gradient. F-type ATPases consist of two structural domains, F(1) containing the extramembraneous catalytic core and F(0) containing the membrane proton channel, linked together by a central stalk and a peripheral stalk. During catalysis, ATP synthesis in the catalytic domain of F(1) is coupled via a rotary mechanism of the central stalk subunits to proton translocation. Functionally, component of the F(0) channel, it forms part of the peripheral stalk, linking F(1) to F(0). The b'-subunit is a diverged and duplicated form of b found in plants and photosynthetic bacteria. The sequence is that of ATP synthase subunit b 2 (atpF2) from Rhodopseudomonas palustris (strain BisA53).